The following is a 508-amino-acid chain: tRNA (guanine(37)-N(1))-methyltransferase (508 aa).

Residues 1 to 53 constitute a mitochondrion transit peptide; sequence MKFNFWKGLWKPKSLTPTLSHRLYRRMYTPQPPLNREMTVLDRSKFTVSLNLA. His-253 is an S-adenosyl-L-methionine binding site. The segment covering 267-284 has biased composition (basic and acidic residues); sequence RERKQQERAKRENHEKST. Positions 267 to 291 are disordered; that stretch reads RERKQQERAKRENHEKSTETAVEPD. Residues 323 to 324, 351 to 352, and Asn-402 contribute to the S-adenosyl-L-methionine site; these read DL and DG.

This sequence belongs to the class I-like SAM-binding methyltransferase superfamily. TRM5/TYW2 family. In terms of assembly, monomer.

Its subcellular location is the mitochondrion matrix. It is found in the nucleus. It localises to the cytoplasm. It carries out the reaction guanosine(37) in tRNA + S-adenosyl-L-methionine = N(1)-methylguanosine(37) in tRNA + S-adenosyl-L-homocysteine + H(+). Its function is as follows. Specifically methylates the N1 position of guanosine-37 in various cytoplasmic and mitochondrial tRNAs. Methylation is not dependent on the nature of the nucleoside 5' of the target nucleoside. This is the first step in the biosynthesis of wybutosine (yW), a modified base adjacent to the anticodon of tRNAs and required for accurate decoding. This chain is tRNA (guanine(37)-N(1))-methyltransferase, found in Yarrowia lipolytica (strain CLIB 122 / E 150) (Yeast).